We begin with the raw amino-acid sequence, 208 residues long: Outer-membrane lipoprotein carrier protein (208 aa).

Positions 1-22 (MKKIFAIAALSLPLFSHFPAFA) are cleaved as a signal peptide.

It belongs to the LolA family. Monomer.

It localises to the periplasm. In terms of biological role, participates in the translocation of lipoproteins from the inner membrane to the outer membrane. Only forms a complex with a lipoprotein if the residue after the N-terminal Cys is not an aspartate (The Asp acts as a targeting signal to indicate that the lipoprotein should stay in the inner membrane). This Shewanella halifaxensis (strain HAW-EB4) protein is Outer-membrane lipoprotein carrier protein.